The sequence spans 37 residues: Mau operon transcriptional activator (37 aa).

It belongs to the LysR transcriptional regulatory family.

Functionally, transcriptional activator of the mau genes involved in methylamine metabolism. The chain is Mau operon transcriptional activator (mauR) from Paracoccus versutus (Thiobacillus versutus).